The primary structure comprises 140 residues: Extracellular globin-1 (140 aa).

Residues 1 to 140 enclose the Globin domain; sequence ECDVLERFKV…YDFIASGIKP (140 aa). Cys2 and Cys130 are oxidised to a cystine. Residue His93 coordinates heme b.

This sequence belongs to the globin family. As to quaternary structure, the giant hemoglobins of worms are formed of a monomeric subunit and a disulfide-bonded trimer. This subunit is monomeric.

The protein localises to the secreted. The protein is Extracellular globin-1 of Metaphire hilgendorfi (Earthworm).